We begin with the raw amino-acid sequence, 331 residues long: Biotin synthase (331 aa).

The region spanning 52 to 277 (PDVEVEGIIS…RTMLRFAGGR (226 aa)) is the Radical SAM core domain. [4Fe-4S] cluster is bound by residues C67, C71, and C74. [2Fe-2S] cluster contacts are provided by C110, C143, C202, and R272.

It belongs to the radical SAM superfamily. Biotin synthase family. As to quaternary structure, homodimer. Requires [4Fe-4S] cluster as cofactor. It depends on [2Fe-2S] cluster as a cofactor.

It catalyses the reaction (4R,5S)-dethiobiotin + (sulfur carrier)-SH + 2 reduced [2Fe-2S]-[ferredoxin] + 2 S-adenosyl-L-methionine = (sulfur carrier)-H + biotin + 2 5'-deoxyadenosine + 2 L-methionine + 2 oxidized [2Fe-2S]-[ferredoxin]. It functions in the pathway cofactor biosynthesis; biotin biosynthesis; biotin from 7,8-diaminononanoate: step 2/2. In terms of biological role, catalyzes the conversion of dethiobiotin (DTB) to biotin by the insertion of a sulfur atom into dethiobiotin via a radical-based mechanism. The chain is Biotin synthase from Mycolicibacterium vanbaalenii (strain DSM 7251 / JCM 13017 / BCRC 16820 / KCTC 9966 / NRRL B-24157 / PYR-1) (Mycobacterium vanbaalenii).